The primary structure comprises 77 residues: U10-lycotoxin-Ls1d (77 aa).

Residues 1–20 (MKLIIFTGLFLFAIVSLIEA) form the signal peptide. Residues 21 to 26 (EEESGR) constitute a propeptide that is removed on maturation.

Belongs to the neurotoxin 19 (CSTX) family. 09 (U10-Lctx) subfamily. Post-translationally, contains 4 disulfide bonds. In terms of tissue distribution, expressed by the venom gland.

It localises to the secreted. In Lycosa singoriensis (Wolf spider), this protein is U10-lycotoxin-Ls1d.